We begin with the raw amino-acid sequence, 200 residues long: MSTTIEIPAESSAVAKGKAPLIGASSSSYEKKGGYKKGIAIFDFILRLGAVISALSAAATMGTSDETLPFFTQFFQFEAGYDDFPTFQFFVIAMGFVGGYLVLSLPFSVVAIIRPHAVGIRLLLLILDTVALTLNTAAAAAAAAIVYLAHNGNQSANWLAVCQQFGDFCQKVSGGVVASFVSVLVFLLLVVMSAVALRKH.

The Cytoplasmic portion of the chain corresponds to 1 to 38 (MSTTIEIPAESSAVAKGKAPLIGASSSSYEKKGGYKKG). The helical transmembrane segment at 39 to 59 (IAIFDFILRLGAVISALSAAA) threads the bilayer. The Extracellular portion of the chain corresponds to 60 to 88 (TMGTSDETLPFFTQFFQFEAGYDDFPTFQ). A helical membrane pass occupies residues 89-109 (FFVIAMGFVGGYLVLSLPFSV). Topologically, residues 110-121 (VAIIRPHAVGIR) are cytoplasmic. Residues 122–142 (LLLLILDTVALTLNTAAAAAA) form a helical membrane-spanning segment. Over 143–175 (AAIVYLAHNGNQSANWLAVCQQFGDFCQKVSGG) the chain is Extracellular. Asparagine 153 is a glycosylation site (N-linked (GlcNAc...) asparagine). A helical membrane pass occupies residues 176 to 196 (VVASFVSVLVFLLLVVMSAVA). Topologically, residues 197–200 (LRKH) are cytoplasmic.

The protein belongs to the Casparian strip membrane proteins (CASP) family. In terms of assembly, homodimer and heterodimers.

It is found in the cell membrane. Regulates membrane-cell wall junctions and localized cell wall deposition. Required for establishment of the Casparian strip membrane domain (CSD) and the subsequent formation of Casparian strips, a cell wall modification of the root endodermis that determines an apoplastic barrier between the intraorganismal apoplasm and the extraorganismal apoplasm and prevents lateral diffusion. This Ricinus communis (Castor bean) protein is Casparian strip membrane protein 1.